Reading from the N-terminus, the 778-residue chain is MEKKILEQLEFEKVKEQFWPYLQTEQGQLELDLLEPIANKDKIQAYFTELEEMAAIFVEHHHFALGGLSDVSESMQRLDLEADLSIQELLAVKKLLQVSAEVCRFYADLENVDLVALKALFEKIESFPSLQGSLQAINDAGFVEGFASPELESIRRQISNKEHASRQLLQDILKKQAAYLSESLIASRNGRSVLPVKNTYRHKVAGVVHDMSASGSTVYIEPRALVSLNEELTQLQTDERHEIGRILHELSEQLRPHSRSLRNNAWLLGHLDLVRAKYLYMQAKQATVPVISDDKSLQLLNARHPLIQNPVANDLHFANDLAVIVITGPNTGGKTIMLKTLGLAQVMAQSGLPILADKGSRVAVFNGIYADIGDEQSIEQSLSTFSSHMTHIVEILNQADSDSLILFDELGAGTDPQEGASLAMAILEQLRLTNIKTMATTHYPELKAYGIETAYVENASMAFDNVSLKPTYRFMQGVPGRSNAFDIARRLGLAEHIVKEAQAMTATDHDVNRIIEQLEQQTLESRKRLEHIKEVEQDNLKFNRAVKKLYNEFSHAKDKELEKAALEAREIVDIALAESDSILSQLHEKAELKPHEIIEAKHRLKQLAPEQSLSQNKVLKKAKKWRAPRVGDDIIVTAYGQRGTLLAQLKDKRWEAQVGLIKLTLKEDEFSLVKLKEEAQQPKKRAVKVVKKAATGKGPRARLDLRGKRYEEAMQELDAFIDQALLNNMSQVDIIHGIGTGVIREAVGKYLRRNKHVKSFGYAPQNAGGSGCTIANLG.

328-335 (GPNTGGKT) is an ATP binding site. In terms of domain architecture, Smr spans 703 to 778 (LDLRGKRYEE…GSGCTIANLG (76 aa)).

The protein belongs to the DNA mismatch repair MutS family. MutS2 subfamily. As to quaternary structure, homodimer. Binds to stalled ribosomes, contacting rRNA.

Endonuclease that is involved in the suppression of homologous recombination and thus may have a key role in the control of bacterial genetic diversity. In terms of biological role, acts as a ribosome collision sensor, splitting the ribosome into its 2 subunits. Detects stalled/collided 70S ribosomes which it binds and splits by an ATP-hydrolysis driven conformational change. Acts upstream of the ribosome quality control system (RQC), a ribosome-associated complex that mediates the extraction of incompletely synthesized nascent chains from stalled ribosomes and their subsequent degradation. Probably generates substrates for RQC. The protein is Endonuclease MutS2 of Streptococcus equi subsp. equi (strain 4047).